The following is a 479-amino-acid chain: Glutamate--tRNA ligase 2 (479 aa).

Positions 18 to 28 (PSPTGFLHIGG) match the 'HIGH' region motif. A 'KMSKS' region motif is present at residues 244-248 (KLSKR). Lys247 serves as a coordination point for ATP.

Belongs to the class-I aminoacyl-tRNA synthetase family. Glutamate--tRNA ligase type 1 subfamily. As to quaternary structure, monomer.

It localises to the cytoplasm. It catalyses the reaction tRNA(Glu) + L-glutamate + ATP = L-glutamyl-tRNA(Glu) + AMP + diphosphate. Catalyzes the attachment of glutamate to tRNA(Glu) in a two-step reaction: glutamate is first activated by ATP to form Glu-AMP and then transferred to the acceptor end of tRNA(Glu). In Maricaulis maris (strain MCS10) (Caulobacter maris), this protein is Glutamate--tRNA ligase 2.